The following is a 1109-amino-acid chain: Myosin ID heavy chain (1109 aa).

The Myosin motor domain maps to 7–687 (HGVDDMVMLS…TVFNLEELRE (681 aa)). Position 101–108 (101–108 (GESGAGKT)) interacts with ATP. The segment at 564–586 (IGALVKALSACTPHYIRCIKPNG) is actin-binding. Residues 725 to 919 (KERRRLSIER…VSTPSDGLPA (195 aa)) enclose the TH1 domain. In terms of domain architecture, SH3 spans 958–1017 (NVKPSAKALYDFDAESSMELSFKEGDILTVLDQSSGDWWDAELKGRRGKVPSNYLQLIKN). The interval 1017 to 1109 (NAAPPRAGGP…APRGGMAPRV (93 aa)) is disordered. The span at 1030–1043 (TGNRAPTTTTTSGG) shows a compositional bias: low complexity.

Belongs to the TRAFAC class myosin-kinesin ATPase superfamily. Myosin family. Myosin I heavy chain is single-headed. Dimer of a heavy and a light chain. Inability to self-assemble into filaments.

The protein localises to the cell projection. Its subcellular location is the pseudopodium. It localises to the cytoplasm. The protein resides in the cell cortex. Functionally, myosin is a protein that binds to actin and has ATPase activity that is activated by actin. Myosin id may have a role in chemotaxis and aggregation; it could serve to stabilize and even retract cortical structures, such as pseudopods and lamellopods. Involved in the process of phagocytosis. In Dictyostelium discoideum (Social amoeba), this protein is Myosin ID heavy chain (myoD).